The sequence spans 172 residues: Interferon tau-3 (172 aa).

2 disulfides stabilise this stretch: Cys-1/Cys-99 and Cys-29/Cys-139.

Belongs to the alpha/beta interferon family. IFN-alphaII subfamily. In terms of tissue distribution, constitutively and exclusively expressed in the mononuclear cells of the extraembryonic trophectoderm.

The protein resides in the secreted. Functionally, paracrine hormone primarily responsible for maternal recognition of pregnancy. Interacts with endometrial receptors, probably type I interferon receptors, and blocks estrogen receptor expression, preventing the estrogen-induced increase in oxytocin receptor expression in the endometrium. This results in the suppression of the pulsatile endometrial release of the luteolytic hormone prostaglandin F2-alpha, hindering the regression of the corpus luteum (luteolysis) and therefore a return to ovarian cyclicity. This, and a possible direct effect of IFN-tau on prostaglandin synthesis, leads in turn to continued ovarian progesterone secretion, which stimulates the secretion by the endometrium of the nutrients required for the growth of the conceptus. In summary, displays particularly high antiviral and antiproliferative potency concurrently with particular weak cytotoxicity, high antiluteolytic activity and immunomodulatory properties. In contrast with other IFNs, IFN-tau is not virally inducible. The sequence is that of Interferon tau-3 (IFNT3) from Ovis aries (Sheep).